We begin with the raw amino-acid sequence, 430 residues long: Enolase (430 aa).

(2R)-2-phosphoglycerate is bound at residue Gln166. Glu208 acts as the Proton donor in catalysis. Mg(2+) contacts are provided by Asp245, Glu288, and Asp315. 4 residues coordinate (2R)-2-phosphoglycerate: Lys340, Arg369, Ser370, and Lys391. Lys340 (proton acceptor) is an active-site residue.

This sequence belongs to the enolase family. Mg(2+) serves as cofactor.

It localises to the cytoplasm. The protein resides in the secreted. Its subcellular location is the cell surface. It carries out the reaction (2R)-2-phosphoglycerate = phosphoenolpyruvate + H2O. It functions in the pathway carbohydrate degradation; glycolysis; pyruvate from D-glyceraldehyde 3-phosphate: step 4/5. Its function is as follows. Catalyzes the reversible conversion of 2-phosphoglycerate (2-PG) into phosphoenolpyruvate (PEP). It is essential for the degradation of carbohydrates via glycolysis. The sequence is that of Enolase from Clostridium beijerinckii (strain ATCC 51743 / NCIMB 8052) (Clostridium acetobutylicum).